The following is a 556-amino-acid chain: Arginine--tRNA ligase (556 aa).

Positions 133–143 (ANPTGPIHIGH) match the 'HIGH' region motif.

Belongs to the class-I aminoacyl-tRNA synthetase family. Monomer.

It is found in the cytoplasm. The catalysed reaction is tRNA(Arg) + L-arginine + ATP = L-arginyl-tRNA(Arg) + AMP + diphosphate. The chain is Arginine--tRNA ligase from Dehalococcoides mccartyi (strain CBDB1).